The primary structure comprises 216 residues: MADFNQLFDQWANTYDNTVFSTDNEYTQVFERYETTLQSICDAIQDKKQGLTLEIGVGTGNLTKHLEQQGFQVIGIEPSKQMRRIAKDKLPHIEIVDGHFLSIPVAKTFDSIVTSYAFHHLNLEEKHQALTYLDSFLNQSGKIVIADTMFESEEYKRELLNKVEKDRAYNLLEDLKAEYYEYINDITDIFLNLGYSFTISKMNKYVWIICATKGGL.

The S-adenosyl-L-methionine site is built by G56 and E77.

Belongs to the methyltransferase superfamily. YrrT family.

Functionally, could be a S-adenosyl-L-methionine-dependent methyltransferase. This is an uncharacterized protein from Alkaliphilus oremlandii (strain OhILAs) (Clostridium oremlandii (strain OhILAs)).